Reading from the N-terminus, the 216-residue chain is Adenylate kinase (216 aa).

10-15 (GAGKGT) lines the ATP pocket. Positions 30 to 59 (STGDMLRAAVKAETPVGLKAKAVMEAGQLV) are NMP. AMP is bound by residues Thr-31, Arg-36, 57 to 59 (QLV), 85 to 88 (GYPR), and Gln-92. The segment at 126–164 (GRYTCATCGKGYHDKFEKPAVEGTCDKCGGHEFKRRPDD) is LID. Arg-127 serves as a coordination point for ATP. Residues Cys-130, Cys-133, Cys-150, and Cys-153 each contribute to the Zn(2+) site. Residues Arg-161 and Arg-172 each contribute to the AMP site. Ala-200 contacts ATP.

It belongs to the adenylate kinase family. As to quaternary structure, monomer.

Its subcellular location is the cytoplasm. It catalyses the reaction AMP + ATP = 2 ADP. It functions in the pathway purine metabolism; AMP biosynthesis via salvage pathway; AMP from ADP: step 1/1. In terms of biological role, catalyzes the reversible transfer of the terminal phosphate group between ATP and AMP. Plays an important role in cellular energy homeostasis and in adenine nucleotide metabolism. The chain is Adenylate kinase from Novosphingobium aromaticivorans (strain ATCC 700278 / DSM 12444 / CCUG 56034 / CIP 105152 / NBRC 16084 / F199).